We begin with the raw amino-acid sequence, 215 residues long: Cytochrome b6 (215 aa).

Residues 32–52 form a helical membrane-spanning segment; it reads IFYCFGGLVLTCFLIQVATGF. Residue Cys35 participates in heme c binding. Heme b contacts are provided by His86 and His100. Transmembrane regions (helical) follow at residues 90–110, 116–136, and 186–206; these read ASMM…TGGF, LTWV…VTGY, and AHTF…FLMI. Heme b-binding residues include His187 and His202.

The protein belongs to the cytochrome b family. PetB subfamily. The 4 large subunits of the cytochrome b6-f complex are cytochrome b6, subunit IV (17 kDa polypeptide, PetD), cytochrome f and the Rieske protein, while the 4 small subunits are PetG, PetL, PetM and PetN. The complex functions as a dimer. The cofactor is heme b. Heme c serves as cofactor.

The protein resides in the plastid. It localises to the chloroplast thylakoid membrane. Its function is as follows. Component of the cytochrome b6-f complex, which mediates electron transfer between photosystem II (PSII) and photosystem I (PSI), cyclic electron flow around PSI, and state transitions. In Phaeodactylum tricornutum (strain CCAP 1055/1), this protein is Cytochrome b6.